Consider the following 398-residue polypeptide: Elongation factor Tu (398 aa).

In terms of domain architecture, tr-type G spans 10–207 (KPHVNIGTIG…TVDEYIPEPE (198 aa)). The tract at residues 19-26 (GHVDHGKT) is G1. 19 to 26 (GHVDHGKT) is a binding site for GTP. Thr26 is a binding site for Mg(2+). Residues 63–67 (GITIN) form a G2 region. The G3 stretch occupies residues 84-87 (DAPG). Residues 84-88 (DAPGH) and 139-142 (NKVD) each bind GTP. Residues 139-142 (NKVD) are G4. Residues 177 to 179 (SAL) are G5.

The protein belongs to the TRAFAC class translation factor GTPase superfamily. Classic translation factor GTPase family. EF-Tu/EF-1A subfamily. As to quaternary structure, monomer.

It localises to the cytoplasm. It catalyses the reaction GTP + H2O = GDP + phosphate + H(+). In terms of biological role, GTP hydrolase that promotes the GTP-dependent binding of aminoacyl-tRNA to the A-site of ribosomes during protein biosynthesis. This chain is Elongation factor Tu, found in Streptococcus pneumoniae serotype 4 (strain ATCC BAA-334 / TIGR4).